Consider the following 153-residue polypeptide: Large ribosomal subunit protein uL22 (153 aa).

Belongs to the universal ribosomal protein uL22 family. As to quaternary structure, part of the 50S ribosomal subunit.

Functionally, this protein binds specifically to 23S rRNA. It makes multiple contacts with different domains of the 23S rRNA in the assembled 50S subunit and ribosome. In terms of biological role, the globular domain of the protein is located near the polypeptide exit tunnel on the outside of the subunit, while an extended beta-hairpin is found that lines the wall of the exit tunnel in the center of the 70S ribosome. This is Large ribosomal subunit protein uL22 from Methanocella arvoryzae (strain DSM 22066 / NBRC 105507 / MRE50).